Consider the following 512-residue polypeptide: NADH-quinone oxidoreductase subunit N 2 (512 aa).

The next 14 membrane-spanning stretches (helical) occupy residues 23–43 (AFVP…IDLF), 50–70 (TIIP…VYLQ), 88–108 (FAIF…LISI), 120–140 (SLGE…LMAS), 144–164 (LLMM…LVGY), 179–199 (VIYG…IYGL), 220–240 (ITLM…AGVV), 254–274 (PTPI…AMLI), 295–315 (WVTL…VVAL), 323–343 (LLAY…IVAD), 351–371 (LFYL…IILI), 394–414 (AASL…VGFI), 429–449 (VFVW…YFYF), and 477–497 (LVAF…PLSV).

The protein belongs to the complex I subunit 2 family. As to quaternary structure, NDH-1 is composed of 14 different subunits. Subunits NuoA, H, J, K, L, M, N constitute the membrane sector of the complex.

The protein localises to the cell inner membrane. It carries out the reaction a quinone + NADH + 5 H(+)(in) = a quinol + NAD(+) + 4 H(+)(out). Functionally, NDH-1 shuttles electrons from NADH, via FMN and iron-sulfur (Fe-S) centers, to quinones in the respiratory chain. The immediate electron acceptor for the enzyme in this species is believed to be a menaquinone. Couples the redox reaction to proton translocation (for every two electrons transferred, four hydrogen ions are translocated across the cytoplasmic membrane), and thus conserves the redox energy in a proton gradient. The sequence is that of NADH-quinone oxidoreductase subunit N 2 from Chloroherpeton thalassium (strain ATCC 35110 / GB-78).